The primary structure comprises 84 residues: U4-theraphotoxin-Hhn1ac (84 aa).

An N-terminal signal peptide occupies residues methionine 1–alanine 22. Positions glutamate 23 to arginine 47 are excised as a propeptide. 3 cysteine pairs are disulfide-bonded: cysteine 51/cysteine 65, cysteine 55/cysteine 76, and cysteine 70/cysteine 81.

This sequence belongs to the neurotoxin 12 (Hwtx-2) family. 02 (Hwtx-2) subfamily. As to expression, expressed by the venom gland.

The protein resides in the secreted. Postsynaptic neurotoxin. The polypeptide is U4-theraphotoxin-Hhn1ac (Cyriopagopus hainanus (Chinese bird spider)).